A 333-amino-acid chain; its full sequence is MAGTMPLRPTYVGFVRDTTDALLIFEACLSGTLSHVPRRPHDRERQDLIKSGNIFVYEEHASGIKRWTDSISWSPSRILGNYLLYRELEKPFPPGEKKRARGRNGKSTTQSGGISKARQRNTVPFPQGLEHGNEYPSVPSDDERHLVGSLVDSYDFKEQGLVKKTISITYQGVPHHLVSYYNVEDVKAGLLSGPSDDPRLRGVVPRTELMNGQNFRAPVEEAMGGSYMPSMVASIGYPTLQHQSQMHQSQMHQPQMHQPQMHQSQMHQSQMHQPQMHQPQAHQPQVHQPQVHPPQVHQPQAHQPQYQSQTLHPTHGYQQTYAGQPNAPSSTWW.

Disordered regions lie at residues 93–139 and 241–307; these read PPGE…PSVP and QHQS…PQYQ.

The protein belongs to the MIT1/WOR1 family.

It is found in the nucleus. Functionally, global transcriptional regulator that acts as an activator of secondary metabolism. Required for expression of a yet uncharacterized secondary metabolism gene cluster containing a non-canonical non-ribosomal peptide synthetase. Not required for conidiogenesis nor for pathogenicity, but is involved in vegetative growth. This is Global transcription regulator sge1 from Gibberella fujikuroi (strain CBS 195.34 / IMI 58289 / NRRL A-6831) (Bakanae and foot rot disease fungus).